A 479-amino-acid polypeptide reads, in one-letter code: Trigger factor (479 aa).

The region spanning 174–261 (GDIAVVSFSG…LKELKTRELP (88 aa)) is the PPIase FKBP-type domain. Positions 438-479 (VLESEAKTSKPAAKSKGSKTKSTKTKTNKANTEKPASDKSKS) are disordered. Residues 453–464 (KGSKTKSTKTKT) are compositionally biased toward basic residues. Positions 468–479 (NTEKPASDKSKS) are enriched in basic and acidic residues.

The protein belongs to the FKBP-type PPIase family. Tig subfamily.

It localises to the cytoplasm. The enzyme catalyses [protein]-peptidylproline (omega=180) = [protein]-peptidylproline (omega=0). Functionally, involved in protein export. Acts as a chaperone by maintaining the newly synthesized protein in an open conformation. Functions as a peptidyl-prolyl cis-trans isomerase. This chain is Trigger factor, found in Prochlorococcus marinus (strain MIT 9313).